A 610-amino-acid polypeptide reads, in one-letter code: UvrABC system protein C (610 aa).

Positions 19-97 (GAPGVYKMLD…IKRHKPRYNI (79 aa)) constitute a GIY-YIG domain. Positions 207-242 (EALIDRLAQRMEQAAQRLEFEKAARYRDQISNLRTV) constitute a UVR domain.

It belongs to the UvrC family. As to quaternary structure, interacts with UvrB in an incision complex.

The protein resides in the cytoplasm. Functionally, the UvrABC repair system catalyzes the recognition and processing of DNA lesions. UvrC both incises the 5' and 3' sides of the lesion. The N-terminal half is responsible for the 3' incision and the C-terminal half is responsible for the 5' incision. The sequence is that of UvrABC system protein C from Methylococcus capsulatus (strain ATCC 33009 / NCIMB 11132 / Bath).